An 84-amino-acid chain; its full sequence is MKVSVLITLAVWGVMFLLTSAQERGSDQMDSPAWLKSMERIFQSEERECRWMFGGCTTDSDCCEHLGCRWEKPSWCAWDGTFRK.

Positions 1-21 (MKVSVLITLAVWGVMFLLTSA) are cleaved as a signal peptide. The propeptide occupies 22–48 (QERGSDQMDSPAWLKSMERIFQSEERE). Cystine bridges form between cysteine 49/cysteine 63, cysteine 56/cysteine 68, and cysteine 62/cysteine 76.

This sequence belongs to the neurotoxin 10 (Hwtx-1) family. 06 (F4b) subfamily. As to expression, expressed by the venom gland.

Its subcellular location is the secreted. In terms of biological role, probable ion channel inhibitor. This is U2-theraphotoxin-Cg1b 1 from Chilobrachys guangxiensis (Chinese earth tiger tarantula).